The chain runs to 530 residues: UDP-glucuronosyltransferase 1A7 (530 aa).

Residues 1-25 (MARAGWTGLLPLYVCLLLTCGFAKA) form the signal peptide. Residues asparagine 71, asparagine 292, and asparagine 344 are each glycosylated (N-linked (GlcNAc...) asparagine). Residues 488–504 (VIGFLLAVVLTVAFITF) form a helical membrane-spanning segment.

It belongs to the UDP-glycosyltransferase family. Homodimer. Homooligomer. Interacts with UGT1A1, UGT1A3, UGT1A4, UGT1A6, UGT1A8, UGT1A9 and UGT1A10 to form heterodimers. Isoform 1 interacts with isoform 2/i2 suggesting that oligomerization is involved in negative regulation of transferase activity by isoform 2. Isoform 1 also interacts with respective i2 isoforms of UGT1A1, UGT1A3, UGT1A4, UGT1A6, UGT1A8, UGT1A9 and UGT1A10. In terms of tissue distribution, liver and gastric tissue. Isoform 1 and isoform 2 are expressed in esophagus. Neither isoform is expressed in liver, kidney, colon and small intestine.

It is found in the endoplasmic reticulum membrane. The enzyme catalyses glucuronate acceptor + UDP-alpha-D-glucuronate = acceptor beta-D-glucuronoside + UDP + H(+). It carries out the reaction 17alpha-estradiol + UDP-alpha-D-glucuronate = 17alpha-estradiol 3-O-(beta-D-glucuronate) + UDP + H(+). It catalyses the reaction prunetin + UDP-alpha-D-glucuronate = prunetin-5-O-beta-D-glucuronide + UDP. The catalysed reaction is 5-epi-5-F2t-IsoP + UDP-alpha-D-glucuronate = 5-epi-5-F2t-IsoP-glucuronide + UDP + H(+). The enzyme catalyses (E)-ferulate + UDP-alpha-D-glucuronate = (E)-ferulic acid beta-D-glucuronate ester + UDP. It carries out the reaction candesartan + UDP-alpha-D-glucuronate = candesartan O-beta-D-glucuronoside + UDP. It catalyses the reaction SN-38 + UDP-alpha-D-glucuronate = SN-38 O-beta-D-glucuronide + UDP + H(+). The catalysed reaction is mycophenolate + UDP-alpha-D-glucuronate = mycophenolate 7-O-beta-D-glucuronide + UDP + H(+). In terms of biological role, UDP-glucuronosyltransferase (UGT) that catalyzes phase II biotransformation reactions in which lipophilic substrates are conjugated with glucuronic acid to increase the metabolite's water solubility, thereby facilitating excretion into either the urine or bile. Essential for the elimination and detoxification of drugs, xenobiotics and endogenous compounds. Catalyzes the glucuronidation of endogenous estrogen hormone epiestradiol. Involved in the glucuronidation of F2-isoprostane (5-epi-5-F2t-IsoP). Involved in the glucuronidation of the phytochemical ferulic acid at the carboxylic acid group. Also catalyzes the glucuronidation of the isoflavones genistein, daidzein, glycitein, formononetin, biochanin A and prunetin, which are phytoestrogens with anticancer and cardiovascular properties. Involved in the glucuronidation of the AGTR1 angiotensin receptor antagonist caderastan, a drug which can inhibit the effect of angiotensin II. Involved in the biotransformation of 7-ethyl-10-hydroxycamptothecin (SN-38), the pharmacologically active metabolite of the anticancer drug irinotecan. Also metabolizes mycophenolate, an immunosuppressive agent. Functionally, lacks UGT glucuronidation activity but acts as a negative regulator of isoform 1. The polypeptide is UDP-glucuronosyltransferase 1A7 (Homo sapiens (Human)).